The primary structure comprises 54 residues: ATP synthase protein 8 (54 aa).

A helical membrane pass occupies residues Trp-8–Leu-28.

The protein belongs to the ATPase protein 8 family. F-type ATPases have 2 components, CF(1) - the catalytic core - and CF(0) - the membrane proton channel.

The protein localises to the mitochondrion membrane. Mitochondrial membrane ATP synthase (F(1)F(0) ATP synthase or Complex V) produces ATP from ADP in the presence of a proton gradient across the membrane which is generated by electron transport complexes of the respiratory chain. F-type ATPases consist of two structural domains, F(1) - containing the extramembraneous catalytic core and F(0) - containing the membrane proton channel, linked together by a central stalk and a peripheral stalk. During catalysis, ATP synthesis in the catalytic domain of F(1) is coupled via a rotary mechanism of the central stalk subunits to proton translocation. Part of the complex F(0) domain. Minor subunit located with subunit a in the membrane. In Patiria pectinifera (Starfish), this protein is ATP synthase protein 8 (MT-ATP8).